A 666-amino-acid polypeptide reads, in one-letter code: MLGKLDWSAIPFDQPIPLIAGAVVLVAILAVLVWVVVKGHLPYLWHEWITSVDHKRIGVMYILLASIMLLRGGSDAIMMRIQQAVAYQSQGYLPPEHYNQIFSAHGTIMIFFVAMPFVIGLMNLVVPLQLGVRDVAFPTLNSVGFWLTATGALLVNLSLVIGEFARTGWLAFPPLSGLSYSPGVGVDYYAWSLQISGVGTLVAGINLVTTVLKLRTKGMNYLRMPMFCWTTLASNLLIVAAFPILTATLAMLLLDRYLGFHFFTNEAGGNVMMFMNLIWAWGHPEVYILVLPAFGIFSEVVSTFSGKALFGYRSMVLATMAICVISFMVWLHHFFTMGAGPDVNAIFGIASMIIAVPTGVKIYNWLFTMYGGRIRFATPMLWAVGFMVTFIIGGLTGVLVAVPPADFMLHNSMFLVAHFHNVIIGGVLFGAFAGFEYWFPKAFGFRLDERWGKLAFWFTFLGFYVTFMPLYIAGMLGMTRRLQHYDVAAWRPWMLVAAAGMAVLTIGVICQIMQLVVSIRNREALRDRTGDPWDGRSLEWATSSPPPVFNFAFSPDVRGEDAYWDMKTHARQQSFEHDAPEYHDIEMPRNSPTGFICAFFATIMGFALIWHIWWMVILGGIGAFATFVVFAWRDHDEYVIPADEVARIDRINLEERRSLVSMAGVV.

The next 2 membrane-spanning stretches (helical) occupy residues 16–36 (IPLIAGAVVLVAILAVLVWVV) and 57–77 (IGVMYILLASIMLLRGGSDAI). A heme b-binding site is contributed by H105. The next 13 membrane-spanning stretches (helical) occupy residues 108-128 (IMIFFVAMPFVIGLMNLVVPL), 142-162 (SVGFWLTATGALLVNLSLVIG), 192-212 (SLQISGVGTLVAGINLVTTVL), 234-254 (SNLLIVAAFPILTATLAMLLL), 277-297 (LIWAWGHPEVYILVLPAFGIF), 315-335 (MVLATMAICVISFMVWLHHFF), 346-366 (IFGIASMIIAVPTGVKIYNWL), 380-400 (MLWAVGFMVTFIIGGLTGVLV), 413-433 (MFLVAHFHNVIIGGVLFGAFA), 456-476 (FWFTFLGFYVTFMPLYIAGML), 493-513 (WMLVAAAGMAVLTIGVICQIM), 591-611 (SPTGFICAFFATIMGFALIWH), and 612-632 (IWWMVILGGIGAFATFVVFAW). The Cu cation site is built by H283, Y287, H332, and H333. The segment at residues 283–287 (HPEVY) is a cross-link (1'-histidyl-3'-tyrosine (His-Tyr)). H418 and H420 together coordinate heme b.

Belongs to the heme-copper respiratory oxidase family.

It localises to the cell membrane. The catalysed reaction is 4 Fe(II)-[cytochrome c] + O2 + 8 H(+)(in) = 4 Fe(III)-[cytochrome c] + 2 H2O + 4 H(+)(out). Its pathway is energy metabolism; oxidative phosphorylation. This is Probable cytochrome c oxidase subunit 1 from Bradyrhizobium diazoefficiens (strain JCM 10833 / BCRC 13528 / IAM 13628 / NBRC 14792 / USDA 110).